The following is a 217-amino-acid chain: tRNA (guanine-N(7)-)-methyltransferase (217 aa).

S-adenosyl-L-methionine-binding residues include Glu48, Glu73, Asn100, and Asp123. Asp123 is a catalytic residue. Substrate is bound by residues Lys127 and Asp159.

The protein belongs to the class I-like SAM-binding methyltransferase superfamily. TrmB family.

The enzyme catalyses guanosine(46) in tRNA + S-adenosyl-L-methionine = N(7)-methylguanosine(46) in tRNA + S-adenosyl-L-homocysteine. It functions in the pathway tRNA modification; N(7)-methylguanine-tRNA biosynthesis. Catalyzes the formation of N(7)-methylguanine at position 46 (m7G46) in tRNA. This chain is tRNA (guanine-N(7)-)-methyltransferase, found in Leptospira interrogans serogroup Icterohaemorrhagiae serovar Lai (strain 56601).